An 895-amino-acid chain; its full sequence is Glutamate receptor 2.3 (895 aa).

The first 23 residues, M1–G23, serve as a signal peptide directing secretion. The Extracellular segment spans residues Q24–K582. Residues N52, N203, N266, N330, N342, N477, and N542 are each glycosylated (N-linked (GlcNAc...) asparagine). A helical transmembrane segment spans residues L583–Y603. The Cytoplasmic segment spans residues K604–S610. Residues G611–A631 traverse the membrane as a helical segment. Over P632–R635 the chain is Cytoplasmic. The helical transmembrane segment at V636 to T656 threads the bilayer. Residues Q657–S830 lie on the Extracellular side of the membrane. A helical transmembrane segment spans residues F831–Y851. Residues C852–L895 lie on the Cytoplasmic side of the membrane. A disordered region spans residues S873–L895.

It belongs to the glutamate-gated ion channel (TC 1.A.10.1) family. As to quaternary structure, may form heteromers. In terms of tissue distribution, expressed predominantly in roots.

The protein localises to the membrane. Glutamate-gated receptor that probably acts as a non-selective cation channel. May be involved in light-signal transduction and calcium homeostasis via the regulation of calcium influx into cells. The chain is Glutamate receptor 2.3 (GLR2.3) from Arabidopsis thaliana (Mouse-ear cress).